A 453-amino-acid chain; its full sequence is Trigger factor (453 aa).

The 86-residue stretch at 171–256 (GDRVTISFKG…ASLIEAPQDI (86 aa)) folds into the PPIase FKBP-type domain.

This sequence belongs to the FKBP-type PPIase family. Tig subfamily.

It localises to the cytoplasm. The catalysed reaction is [protein]-peptidylproline (omega=180) = [protein]-peptidylproline (omega=0). Functionally, involved in protein export. Acts as a chaperone by maintaining the newly synthesized protein in an open conformation. Functions as a peptidyl-prolyl cis-trans isomerase. This is Trigger factor from Nitrobacter hamburgensis (strain DSM 10229 / NCIMB 13809 / X14).